The chain runs to 181 residues: CDP-diacylglycerol--glycerol-3-phosphate 3-phosphatidyltransferase (181 aa).

The next 4 membrane-spanning stretches (helical) occupy residues 8–28 (PNYL…LFYI), 35–55 (KLGA…GYIA), 64–84 (FGKM…TIML), and 148–168 (IIYL…LTII).

The protein belongs to the CDP-alcohol phosphatidyltransferase class-I family.

It localises to the cell membrane. It catalyses the reaction a CDP-1,2-diacyl-sn-glycerol + sn-glycerol 3-phosphate = a 1,2-diacyl-sn-glycero-3-phospho-(1'-sn-glycero-3'-phosphate) + CMP + H(+). The protein operates within phospholipid metabolism; phosphatidylglycerol biosynthesis; phosphatidylglycerol from CDP-diacylglycerol: step 1/2. This protein catalyzes the committed step to the synthesis of the acidic phospholipids. This Rickettsia prowazekii (strain Madrid E) protein is CDP-diacylglycerol--glycerol-3-phosphate 3-phosphatidyltransferase (pgsA).